The chain runs to 204 residues: N-(5'-phosphoribosyl)anthranilate isomerase (204 aa).

The protein belongs to the TrpF family.

It carries out the reaction N-(5-phospho-beta-D-ribosyl)anthranilate = 1-(2-carboxyphenylamino)-1-deoxy-D-ribulose 5-phosphate. It functions in the pathway amino-acid biosynthesis; L-tryptophan biosynthesis; L-tryptophan from chorismate: step 3/5. This Bacillus cereus (strain AH820) protein is N-(5'-phosphoribosyl)anthranilate isomerase.